The sequence spans 469 residues: Argininosuccinate lyase (469 aa).

The protein belongs to the lyase 1 family. Argininosuccinate lyase subfamily.

The protein localises to the cytoplasm. The catalysed reaction is 2-(N(omega)-L-arginino)succinate = fumarate + L-arginine. Its pathway is amino-acid biosynthesis; L-arginine biosynthesis; L-arginine from L-ornithine and carbamoyl phosphate: step 3/3. This Burkholderia cenocepacia (strain ATCC BAA-245 / DSM 16553 / LMG 16656 / NCTC 13227 / J2315 / CF5610) (Burkholderia cepacia (strain J2315)) protein is Argininosuccinate lyase.